A 194-amino-acid polypeptide reads, in one-letter code: Imidazoleglycerol-phosphate dehydratase (194 aa).

This sequence belongs to the imidazoleglycerol-phosphate dehydratase family.

Its subcellular location is the cytoplasm. It carries out the reaction D-erythro-1-(imidazol-4-yl)glycerol 3-phosphate = 3-(imidazol-4-yl)-2-oxopropyl phosphate + H2O. It functions in the pathway amino-acid biosynthesis; L-histidine biosynthesis; L-histidine from 5-phospho-alpha-D-ribose 1-diphosphate: step 6/9. The polypeptide is Imidazoleglycerol-phosphate dehydratase (Chloroherpeton thalassium (strain ATCC 35110 / GB-78)).